A 59-amino-acid polypeptide reads, in one-letter code: Large ribosomal subunit protein uL30 (59 aa).

Belongs to the universal ribosomal protein uL30 family. Part of the 50S ribosomal subunit.

This Solidesulfovibrio magneticus (strain ATCC 700980 / DSM 13731 / RS-1) (Desulfovibrio magneticus) protein is Large ribosomal subunit protein uL30.